Consider the following 392-residue polypeptide: NADH-quinone oxidoreductase subunit D (392 aa).

Belongs to the complex I 49 kDa subunit family. NDH-1 is composed of 14 different subunits. Subunits NuoB, C, D, E, F, and G constitute the peripheral sector of the complex.

The protein resides in the cell inner membrane. It catalyses the reaction a quinone + NADH + 5 H(+)(in) = a quinol + NAD(+) + 4 H(+)(out). Its function is as follows. NDH-1 shuttles electrons from NADH, via FMN and iron-sulfur (Fe-S) centers, to quinones in the respiratory chain. The immediate electron acceptor for the enzyme in this species is believed to be ubiquinone. Couples the redox reaction to proton translocation (for every two electrons transferred, four hydrogen ions are translocated across the cytoplasmic membrane), and thus conserves the redox energy in a proton gradient. The chain is NADH-quinone oxidoreductase subunit D from Paramagnetospirillum magneticum (strain ATCC 700264 / AMB-1) (Magnetospirillum magneticum).